The chain runs to 392 residues: Phosphoglycerate kinase (392 aa).

Residues 21–23 (DLN), Arg36, 59–62 (HLGR), Arg113, and Arg146 each bind substrate. Residues Lys197, Glu319, and 345-348 (GGDT) each bind ATP.

The protein belongs to the phosphoglycerate kinase family. Monomer.

It is found in the cytoplasm. It carries out the reaction (2R)-3-phosphoglycerate + ATP = (2R)-3-phospho-glyceroyl phosphate + ADP. It participates in carbohydrate degradation; glycolysis; pyruvate from D-glyceraldehyde 3-phosphate: step 2/5. This chain is Phosphoglycerate kinase, found in Alkalilimnicola ehrlichii (strain ATCC BAA-1101 / DSM 17681 / MLHE-1).